Reading from the N-terminus, the 263-residue chain is Ret finger protein-like 4B (263 aa).

The segment at 11 to 53 (CPVCLDFFSCSISLSCTHVFCFDCIQRYILENHDFRAMCPLCR) adopts an RING-type zinc-finger fold. One can recognise a B30.2/SPRY domain in the interval 76–263 (HNSRLEQSLH…ESGNVLTICP (188 aa)).

This chain is Ret finger protein-like 4B (RFPL4B), found in Homo sapiens (Human).